Reading from the N-terminus, the 55-residue chain is Large ribosomal subunit protein bL33 (55 aa).

This sequence belongs to the bacterial ribosomal protein bL33 family.

This chain is Large ribosomal subunit protein bL33, found in Paraburkholderia phytofirmans (strain DSM 17436 / LMG 22146 / PsJN) (Burkholderia phytofirmans).